A 261-amino-acid chain; its full sequence is Chloroplastic import inner membrane translocase subunit HP30-1 (261 aa).

Transmembrane regions (helical) follow at residues A59–M77, N113–K129, S139–S155, and M163–F180.

Belongs to the Tim17/Tim22/Tim23 family. As to quaternary structure, probable component of a protein-conducting channel made of HP30-1, HP30-2 and HP20 that mediates the import of transit sequence-less proteins into the chloroplastic inner membrane. Interacts with CEQORH.

The protein resides in the plastid. It is found in the chloroplast inner membrane. Functionally, together with HP30-2 and HP20, triggers the import and insertion of transit sequence-less multi-pass transmembrane proteins (e.g. CEQORH) into the chloroplastic inner membrane. The chain is Chloroplastic import inner membrane translocase subunit HP30-1 from Arabidopsis thaliana (Mouse-ear cress).